Reading from the N-terminus, the 356-residue chain is 3-dehydroquinate synthase (356 aa).

Residues 106–110 (GVVGD), 130–131 (TS), Lys143, Lys152, and 170–173 (FLKT) contribute to the NAD(+) site. Residues Glu185, His246, and His263 each contribute to the Zn(2+) site.

It belongs to the sugar phosphate cyclases superfamily. Dehydroquinate synthase family. The cofactor is NAD(+). Co(2+) is required as a cofactor. Requires Zn(2+) as cofactor.

It is found in the cytoplasm. The catalysed reaction is 7-phospho-2-dehydro-3-deoxy-D-arabino-heptonate = 3-dehydroquinate + phosphate. It functions in the pathway metabolic intermediate biosynthesis; chorismate biosynthesis; chorismate from D-erythrose 4-phosphate and phosphoenolpyruvate: step 2/7. In terms of biological role, catalyzes the conversion of 3-deoxy-D-arabino-heptulosonate 7-phosphate (DAHP) to dehydroquinate (DHQ). This chain is 3-dehydroquinate synthase, found in Clostridium acetobutylicum (strain ATCC 824 / DSM 792 / JCM 1419 / IAM 19013 / LMG 5710 / NBRC 13948 / NRRL B-527 / VKM B-1787 / 2291 / W).